The sequence spans 594 residues: Bifunctional lycopene cyclase/phytoene synthase (594 aa).

Positions 1–249 (MGLDYLMVHV…VVFGIAAMHN (249 aa)) are lycopene beta-cyclase. A run of 7 helical transmembrane segments spans residues 3-23 (LDYL…LTIL), 35-55 (KIVL…SYLI), 77-97 (LEEV…YIIF), 130-150 (LGTL…YIGG), 153-173 (MYLG…WVLM), 176-196 (FLLA…TLYL), and 227-247 (IEEA…IAAM). A phytoene synthase region spans residues 256 to 594 (YKAFISTTAM…RFKRAWLAML (339 aa)).

It in the N-terminal section; belongs to the lycopene beta-cyclase family. In the C-terminal section; belongs to the phytoene/squalene synthase family.

The protein resides in the membrane. It carries out the reaction all-trans-lycopene = gamma-carotene. It catalyses the reaction gamma-carotene = all-trans-beta-carotene. The catalysed reaction is 2 (2E,6E,10E)-geranylgeranyl diphosphate = 15-cis-phytoene + 2 diphosphate. The protein operates within carotenoid biosynthesis; beta-carotene biosynthesis. It participates in carotenoid biosynthesis; phytoene biosynthesis; all-trans-phytoene from geranylgeranyl diphosphate: step 1/1. Bifunctional enzyme that catalyzes the reactions from geranylgeranyl diphosphate to phytoene (phytoene synthase) and lycopene to beta-carotene via the intermediate gamma-carotene (lycopene cyclase). This chain is Bifunctional lycopene cyclase/phytoene synthase, found in Arthroderma gypseum (strain ATCC MYA-4604 / CBS 118893) (Microsporum gypseum).